A 252-amino-acid chain; its full sequence is Protein IRON-RELATED TRANSCRIPTION FACTOR 3 (252 aa).

Residues 36–49 (PRKVHKSEREKLKR) form a basic motif region. The bHLH domain occupies 36-86 (PRKVHKSEREKLKRGHLNDLFGELGNMLEADRQSNGKACILTDTTRILRDL). The segment at 50 to 86 (GHLNDLFGELGNMLEADRQSNGKACILTDTTRILRDL) is helix-loop-helix motif. Residues 76-131 (LTDTTRILRDLLSQVKSLRQENSTLQNESNYVTMERNELQDENGALRSEISDLQNE) adopt a coiled-coil conformation. The segment at 135–252 (RATGSPGWGH…GLPRMEDEQM (118 aa)) is disordered. The segment covering 162 to 176 (PSQQPMQPSPMTTST) has biased composition (low complexity). The span at 208–219 (PAEDPEPSEDQE) shows a compositional bias: acidic residues.

This sequence belongs to the bHLH protein family.

It localises to the nucleus. Its function is as follows. Transcription factor that acts as a negative regulator of the iron deficiency response. Suppresses the induction of iron deficiency responsive genes, such as NAS1, NAS2, IRO2, IRT1, YSL15, and NRAMP1. The polypeptide is Protein IRON-RELATED TRANSCRIPTION FACTOR 3 (Oryza sativa subsp. japonica (Rice)).